We begin with the raw amino-acid sequence, 212 residues long: MKKVLMTGFEPFGGESINPALEAVKRLDGKKLDGGEVMICQVPVTRYESIDTVVNAIEQYQPDIVITVGQAAGRAAITPERVAINVDDFRIPDNGGHQPIDEPVILDGPDAYFTTLPIKAITSALHKASIPCQVSNTAGTFVCNHLFYGIQHYLRDKSVRHGFVHIPLLPEQDASGNQPTMSLDLIVEGLALLAQAVIDNESDVAITAGQIC.

Residues Glu80, Cys143, and His165 contribute to the active site.

Belongs to the peptidase C15 family. Homotetramer.

It localises to the cytoplasm. The catalysed reaction is Release of an N-terminal pyroglutamyl group from a polypeptide, the second amino acid generally not being Pro.. In terms of biological role, removes 5-oxoproline from various penultimate amino acid residues except L-proline. This chain is Pyrrolidone-carboxylate peptidase, found in Vibrio campbellii (strain ATCC BAA-1116).